Reading from the N-terminus, the 65-residue chain is Weak toxin CM-10 (65 aa).

5 cysteine pairs are disulfide-bonded: cysteine 3-cysteine 24, cysteine 6-cysteine 11, cysteine 17-cysteine 42, cysteine 46-cysteine 57, and cysteine 58-cysteine 63.

Belongs to the three-finger toxin family. Ancestral subfamily. Orphan group II sub-subfamily. Expressed by the venom gland.

It is found in the secreted. Binds with low affinity to muscular (alpha-1-beta-1-delta-epsilon/CHRNA1-CHRNB1-CHRND-CHRNE) and very low affinity to neuronal (alpha-7/CHRNA7) nicotinic acetylcholine receptor (nAChR). The sequence is that of Weak toxin CM-10 from Naja nivea (Cape cobra).